Reading from the N-terminus, the 563-residue chain is 4-hydroxy-7-methoxy-3-oxo-3,4-dihydro-2H-1,4-benzoxazin-2-yl glucoside beta-D-glucosidase 2, chloroplastic (563 aa).

A chloroplast-targeting transit peptide spans 1 to 51 (MAPLLAAAMNHAAHPVLRSHLGPNNESFSRHHLSSSPQSSKRRFNLSFTPR). The interval 17–43 (LRSHLGPNNESFSRHHLSSSPQSSKRR) is disordered. Residues Q89, H193, and 241 to 242 (NE) contribute to the a beta-D-glucoside site. Catalysis depends on E242, which acts as the Proton donor. C261 and C267 are disulfide-bonded. Positions 322-358 (SFLDEQAKERSMDINLGWFLEPVVRGDYPFSMRSLAR) are dimerization. Y384 contacts a beta-D-glucoside. Dimerization regions lie at residues 391-402 (HIDISPKYSPVL) and 447-450 (KYGN). A beta-D-glucoside-binding positions include E457, W508, 515–516 (EW), and Y524. E457 functions as the Nucleophile in the catalytic mechanism.

This sequence belongs to the glycosyl hydrolase 1 family. Homo- and heterodimer. In terms of tissue distribution, expressed in leaves only starting at day 6 after germination.

It localises to the plastid. It is found in the chloroplast. It carries out the reaction Hydrolysis of terminal, non-reducing beta-D-glucosyl residues with release of beta-D-glucose.. It catalyses the reaction DIMBOA beta-D-glucoside + H2O = DIMBOA + D-glucose. The catalysed reaction is DIBOA beta-D-glucoside + H2O = DIBOA + D-glucose. Its function is as follows. Beta-glucosidase acting poorly on artificial aryl beta-glucosides. Has no activity toward the chromogenic substrate 6-bromo-2-naphthyl-beta-D-glucoside (6BNGlc). This Zea mays (Maize) protein is 4-hydroxy-7-methoxy-3-oxo-3,4-dihydro-2H-1,4-benzoxazin-2-yl glucoside beta-D-glucosidase 2, chloroplastic (GLU2).